The primary structure comprises 964 residues: SKI family transcriptional corepressor 1 (964 aa).

Disordered stretches follow at residues 45–72 (TQLG…SSAL), 278–365 (RTFS…GGSA), 414–452 (AGEP…PGPG), 525–587 (AGGG…RKSS), 610–766 (REAY…GPAA), and 793–842 (YLCT…EDGL). Residues 283-310 (QGGGGGGANSGSGGAGKGGAGGGGGPGC) are compositionally biased toward gly residues. Residues 345–355 (ALGLAAAANGP) are compositionally biased toward low complexity. Composition is skewed to gly residues over residues 356-365 (AGPGGPGGSA) and 417-440 (PKGG…GPGA). Residues 571–583 (SLAPLAPPPPPPA) show a composition bias toward pro residues. Positions 652–661 (DTADEPEVDV) are enriched in acidic residues. Basic and acidic residues predominate over residues 798 to 808 (ETHEPDKEDNH). Residues 823–834 (DQRSVSQPSPAN) are compositionally biased toward polar residues. Positions 857 to 921 (ENLAREELQK…DTLCNELDQE (65 aa)) form a coiled coil.

This sequence belongs to the SKI family. In terms of assembly, interacts with LBX1. Interacts with SMAD1, SMAD2 and SMAD3.

The protein localises to the nucleus. In terms of biological role, inhibits BMP signaling. Acts as a transcriptional corepressor of LBX1. The chain is SKI family transcriptional corepressor 1 (Skor1) from Rattus norvegicus (Rat).